A 257-amino-acid chain; its full sequence is Cilia- and flagella-associated protein 300 (257 aa).

It belongs to the CFAP300 family.

It localises to the cytoplasm. Its subcellular location is the cytoskeleton. It is found in the flagellum axoneme. Functionally, cilium- and flagellum-specific protein that plays a role in axonemal structure organization and motility. Plays a role in outer and inner dynein arm assembly. The polypeptide is Cilia- and flagella-associated protein 300 (Chlamydomonas reinhardtii (Chlamydomonas smithii)).